A 124-amino-acid chain; its full sequence is Large ribosomal subunit protein uL22 (124 aa).

This sequence belongs to the universal ribosomal protein uL22 family. Part of the 50S ribosomal subunit.

This protein binds specifically to 23S rRNA; its binding is stimulated by other ribosomal proteins, e.g. L4, L17, and L20. It is important during the early stages of 50S assembly. It makes multiple contacts with different domains of the 23S rRNA in the assembled 50S subunit and ribosome. In terms of biological role, the globular domain of the protein is located near the polypeptide exit tunnel on the outside of the subunit, while an extended beta-hairpin is found that lines the wall of the exit tunnel in the center of the 70S ribosome. The sequence is that of Large ribosomal subunit protein uL22 from Campylobacter lari (strain RM2100 / D67 / ATCC BAA-1060).